Consider the following 203-residue polypeptide: Ribosome hibernation promotion factor (203 aa).

The protein belongs to the HPF/YfiA ribosome-associated protein family. Long HPF subfamily. As to quaternary structure, interacts with 100S ribosomes.

It localises to the cytoplasm. Required for dimerization of active 70S ribosomes into 100S ribosomes in stationary phase; 100S ribosomes are translationally inactive and sometimes present during exponential growth. The chain is Ribosome hibernation promotion factor from Bradyrhizobium diazoefficiens (strain JCM 10833 / BCRC 13528 / IAM 13628 / NBRC 14792 / USDA 110).